Reading from the N-terminus, the 400-residue chain is Imidazolonepropionase (400 aa).

Fe(3+)-binding residues include His-70 and His-72. Residues His-70 and His-72 each coordinate Zn(2+). 3 residues coordinate 4-imidazolone-5-propanoate: Arg-79, Tyr-142, and His-175. Tyr-142 contacts N-formimidoyl-L-glutamate. Position 239 (His-239) interacts with Fe(3+). His-239 serves as a coordination point for Zn(2+). Position 242 (Gln-242) interacts with 4-imidazolone-5-propanoate. A Fe(3+)-binding site is contributed by Asp-314. Residue Asp-314 coordinates Zn(2+). Residues Asn-316 and Gly-318 each coordinate N-formimidoyl-L-glutamate. Thr-319 is a binding site for 4-imidazolone-5-propanoate.

Belongs to the metallo-dependent hydrolases superfamily. HutI family. Requires Zn(2+) as cofactor. Fe(3+) is required as a cofactor.

Its subcellular location is the cytoplasm. It carries out the reaction 4-imidazolone-5-propanoate + H2O = N-formimidoyl-L-glutamate. It functions in the pathway amino-acid degradation; L-histidine degradation into L-glutamate; N-formimidoyl-L-glutamate from L-histidine: step 3/3. Its function is as follows. Catalyzes the hydrolytic cleavage of the carbon-nitrogen bond in imidazolone-5-propanoate to yield N-formimidoyl-L-glutamate. It is the third step in the universal histidine degradation pathway. This chain is Imidazolonepropionase, found in Methylobacterium nodulans (strain LMG 21967 / CNCM I-2342 / ORS 2060).